Consider the following 363-residue polypeptide: D-proline dehydrogenase (363 aa).

3-17 (VAIVGGGIIGLFTAY) provides a ligand contact to FAD.

The protein belongs to the DadA oxidoreductase family. As to quaternary structure, homotetramer. The cofactor is FAD.

It is found in the cell membrane. It catalyses the reaction D-proline + A = 1-pyrroline-2-carboxylate + AH2. In terms of biological role, catalyzes the dehydrogenation of D-proline. Can also use other D-amino acids, but with lower efficiency. This Pyrobaculum islandicum (strain DSM 4184 / JCM 9189 / GEO3) protein is D-proline dehydrogenase (dpdh).